The sequence spans 153 residues: Selenoprotein F (153 aa).

Positions 1–19 (MAGEVYLLWLLPLLQGLAS) are cleaved as a signal peptide. Position 84 (Sec84) is a non-standard amino acid, selenocysteine.

Belongs to the selenoprotein M/F family. As to expression, higher levels in polster, prechordal plate, axis, otic vesicle and somites. Lower levels in fin buds.

It is found in the endoplasmic reticulum lumen. Its function is as follows. May be involved in redox reactions associated with the formation of disulfide bonds. May contribute to the quality control of protein folding in the endoplasmic reticulum. The protein is Selenoprotein F of Danio rerio (Zebrafish).